A 356-amino-acid polypeptide reads, in one-letter code: Holliday junction branch migration complex subunit RuvB (356 aa).

Residues Thr4–Tyr191 are large ATPase domain (RuvB-L). Residues Leu30, Arg31, Gly72, Lys75, Thr76, Thr77, Glu138–Tyr140, Arg181, Tyr191, and Arg228 contribute to the ATP site. Thr76 contacts Mg(2+). The tract at residues Asp192–Asp262 is small ATPAse domain (RuvB-S). The segment at Pro265 to Lys356 is head domain (RuvB-H). Residues Arg301, Arg320, and Arg325 each coordinate DNA.

The protein belongs to the RuvB family. Homohexamer. Forms an RuvA(8)-RuvB(12)-Holliday junction (HJ) complex. HJ DNA is sandwiched between 2 RuvA tetramers; dsDNA enters through RuvA and exits via RuvB. An RuvB hexamer assembles on each DNA strand where it exits the tetramer. Each RuvB hexamer is contacted by two RuvA subunits (via domain III) on 2 adjacent RuvB subunits; this complex drives branch migration. In the full resolvosome a probable DNA-RuvA(4)-RuvB(12)-RuvC(2) complex forms which resolves the HJ.

It localises to the cytoplasm. It carries out the reaction ATP + H2O = ADP + phosphate + H(+). The RuvA-RuvB-RuvC complex processes Holliday junction (HJ) DNA during genetic recombination and DNA repair, while the RuvA-RuvB complex plays an important role in the rescue of blocked DNA replication forks via replication fork reversal (RFR). RuvA specifically binds to HJ cruciform DNA, conferring on it an open structure. The RuvB hexamer acts as an ATP-dependent pump, pulling dsDNA into and through the RuvAB complex. RuvB forms 2 homohexamers on either side of HJ DNA bound by 1 or 2 RuvA tetramers; 4 subunits per hexamer contact DNA at a time. Coordinated motions by a converter formed by DNA-disengaged RuvB subunits stimulates ATP hydrolysis and nucleotide exchange. Immobilization of the converter enables RuvB to convert the ATP-contained energy into a lever motion, pulling 2 nucleotides of DNA out of the RuvA tetramer per ATP hydrolyzed, thus driving DNA branch migration. The RuvB motors rotate together with the DNA substrate, which together with the progressing nucleotide cycle form the mechanistic basis for DNA recombination by continuous HJ branch migration. Branch migration allows RuvC to scan DNA until it finds its consensus sequence, where it cleaves and resolves cruciform DNA. This is Holliday junction branch migration complex subunit RuvB from Burkholderia lata (strain ATCC 17760 / DSM 23089 / LMG 22485 / NCIMB 9086 / R18194 / 383).